A 639-amino-acid polypeptide reads, in one-letter code: AP2-like ethylene-responsive transcription factor CRL5 (639 aa).

Disordered regions lie at residues 25–59 (PHMA…QQQH) and 258–277 (GRKR…HHRK). The span at 43–59 (QQQQQQQQQQHHQQQQH) shows a compositional bias: low complexity. 2 consecutive DNA-binding regions (AP2/ERF) follow at residues 288-351 (QYRG…INFP) and 387-445 (MYRG…TNFD). Low complexity predominate over residues 547-561 (QQQQQHMSMSAASSL). A disordered region spans residues 547–579 (QQQQQHMSMSAASSLVTSLSNSREGSPDRGGGL).

It belongs to the AP2/ERF transcription factor family. AP2 subfamily. As to expression, highly expressed at the base of the stem. Expressed in stems. Expressed a low levels in crown roots and seeds. Expressed in the stem region where adventitious (crown) root initiation occurs.

Its subcellular location is the nucleus. In terms of biological role, acts as a positive regulator of adventitious (crown) root formation by promoting its initiation. Promotes adventitious root initiation through repression of cytokinin signaling by positively regulating the two-component response regulator RR1. Regulated by the auxin response factor and transcriptional activator ARF23/ARF1. In Oryza sativa subsp. japonica (Rice), this protein is AP2-like ethylene-responsive transcription factor CRL5.